Reading from the N-terminus, the 510-residue chain is Protein ERGIC-53 (510 aa).

The N-terminal stretch at 1 to 30 is a signal peptide; the sequence is MAGSRQRGLRARVRPLFCALLLSLGRFVRG. Residues 31-477 are Lumenal-facing; that stretch reads DGVGGDPAVA…ELPPFPSCLS (447 aa). The L-type lectin-like domain maps to 44–267; sequence RRFEYKYSFK…DVLSFLTFQL (224 aa). A carbohydrate is bound by residues S88 and D121. Residues D152, F154, and N156 each coordinate Ca(2+). 2 residues coordinate a carbohydrate: N156 and H178. Residue D181 participates in Ca(2+) binding. A disulfide bridge connects residues C190 and C230. 251–253 is a binding site for a carbohydrate; that stretch reads GGL. The residue at position 425 (S425) is a Phosphoserine. A helical transmembrane segment spans residues 478–498; the sequence is TVHFIIFVVVQTVLFIGYIMY. Over 499–510 the chain is Cytoplasmic; sequence RSQQEAAAKKFF. A mediates interaction with RAB3GAP1, RAB3GAP2 and UBXN6 region spans residues 499–510; sequence RSQQEAAAKKFF. The short motif at 509–510 is the ER export motif element; the sequence is FF.

In terms of assembly, exists both as a covalent disulfide-linked homohexamer, and a complex of three disulfide-linked dimers non-covalently kept together. Interacts with MCFD2. May interact with TMEM115. Interacts with RAB3GAP1 and RAB3GAP2. Interacts with UBXN6. Interacts with SERPINA1/alpha1-antitrypsin. Interacts with BET1. The N-terminal may be partly blocked. As to expression, ubiquitous.

The protein resides in the endoplasmic reticulum-Golgi intermediate compartment membrane. Its subcellular location is the golgi apparatus membrane. It is found in the endoplasmic reticulum membrane. Its function is as follows. Mannose-specific lectin. May recognize sugar residues of glycoproteins, glycolipids, or glycosylphosphatidyl inositol anchors and may be involved in the sorting or recycling of proteins, lipids, or both. The LMAN1-MCFD2 complex forms a specific cargo receptor for the ER-to-Golgi transport of selected proteins. The polypeptide is Protein ERGIC-53 (LMAN1) (Homo sapiens (Human)).